We begin with the raw amino-acid sequence, 132 residues long: Small ribosomal subunit protein uS8 (132 aa).

The protein belongs to the universal ribosomal protein uS8 family. In terms of assembly, part of the 30S ribosomal subunit. Contacts proteins S5 and S12.

Functionally, one of the primary rRNA binding proteins, it binds directly to 16S rRNA central domain where it helps coordinate assembly of the platform of the 30S subunit. The polypeptide is Small ribosomal subunit protein uS8 (Limosilactobacillus reuteri (strain DSM 20016) (Lactobacillus reuteri)).